We begin with the raw amino-acid sequence, 83 residues long: Small ribosomal subunit protein uS17c (83 aa).

This sequence belongs to the universal ribosomal protein uS17 family. In terms of assembly, part of the 30S ribosomal subunit.

It is found in the plastid. It localises to the chloroplast. One of the primary rRNA binding proteins, it binds specifically to the 5'-end of 16S ribosomal RNA. In Porphyra purpurea (Red seaweed), this protein is Small ribosomal subunit protein uS17c (rps17).